Here is a 644-residue protein sequence, read N- to C-terminus: MASNKILGIDLGTTNSAFAVMEGDEPEIIANAEGDRTTPSVVAFADDGERLVGKPAKNQAVQNPDRTIQSIKRHMGEDGYTVEIGDEEYTPEQVSAMILQKIKRDAEEYLGDDVEKAVITVPAYFNDKQRQATKDAGEIAGFEVERIVNEPTAASMAYGLDDESDQTVLVYDLGGGTFDVSVLDLGGGVYEVVATNGDNDLGGDDWDEALIDHLAKEFKNNHGIDLREDRQALQRLKDAAEEAKIELSSKKETTVNLPFITATDSGPVHLEQSITRATFENLTSDLIERTVNPTEQALSDADYSKSDIDEVILVGGSTRMPQVQEQVEALVGQEPKKNVNPDEAVALGAAVQGGVLSGDVDDIVLLDVTPLSLGIEVKGGLFERLIEKNTTIPTEESKVFTTAADNQTSVNVRVFQGEREIAEENELLGAFQLSGIPPAPAGTPQIEVSFNIDENGIVNVEAEDQGSGNAESITIEGGVGLSDEEIDQMQEEAEKHKEEDEARRERIEARNEAETSIQRAETLLEENEEELDDDELVADIEAAIEDVEEVLEDEDADTDEIESATEALTEELQEIGKQMYEGQAAQAGPGGAGGAAGAGPGGMGGMGGAAGPGGAGGAGPGGADADDEEYVDADFEDVDDEDDA.

Disordered stretches follow at residues 490-533 (QEEA…ELDD) and 570-644 (EELQ…EDDA). Residues 492-513 (EAEKHKEEDEARRERIEARNEA) are compositionally biased toward basic and acidic residues. A compositionally biased stretch (acidic residues) spans 523–533 (LLEENEEELDD). Over residues 588 to 622 (GPGGAGGAAGAGPGGMGGMGGAAGPGGAGGAGPGG) the composition is skewed to gly residues. Over residues 624 to 644 (DADDEEYVDADFEDVDDEDDA) the composition is skewed to acidic residues.

This sequence belongs to the heat shock protein 70 family.

Its function is as follows. Acts as a chaperone. This is Chaperone protein DnaK from Halorubrum lacusprofundi (strain ATCC 49239 / DSM 5036 / JCM 8891 / ACAM 34).